We begin with the raw amino-acid sequence, 508 residues long: Adenosine deaminase (508 aa).

A signal peptide spans 1–18 (MFSQLVVWLLATSTVCLA).

This sequence belongs to the metallo-dependent hydrolases superfamily. Adenosine and AMP deaminases family. ADGF subfamily. Zn(2+) is required as a cofactor. In terms of tissue distribution, salivary gland (at protein level).

Its subcellular location is the secreted. It catalyses the reaction adenosine + H2O + H(+) = inosine + NH4(+). In terms of biological role, catalyzes the deamination of adenosine to inosine. The polypeptide is Adenosine deaminase (Lutzomyia longipalpis (Sand fly)).